A 545-amino-acid chain; its full sequence is CTP synthase (545 aa).

Positions 1 to 266 (MTTRYIFVTG…DDLVTKRFGL (266 aa)) are amidoligase domain. Serine 14 contacts CTP. Serine 14 provides a ligand contact to UTP. ATP contacts are provided by residues 15–20 (SLGKGI) and aspartate 72. Residues aspartate 72 and glutamate 140 each coordinate Mg(2+). Residues 147 to 149 (DIE), 187 to 192 (KTKPTQ), and lysine 223 contribute to the CTP site. Residues 187–192 (KTKPTQ) and lysine 223 each bind UTP. Position 239 to 241 (239 to 241 (KDV)) interacts with ATP. In terms of domain architecture, Glutamine amidotransferase type-1 spans 291–542 (TIGMVGKYTE…VAAAVAYQKR (252 aa)). Glycine 352 serves as a coordination point for L-glutamine. Cysteine 379 functions as the Nucleophile; for glutamine hydrolysis in the catalytic mechanism. Residues 380–383 (LGMQ), glutamate 403, and arginine 470 each bind L-glutamine. Active-site residues include histidine 515 and glutamate 517.

It belongs to the CTP synthase family. In terms of assembly, homotetramer.

It catalyses the reaction UTP + L-glutamine + ATP + H2O = CTP + L-glutamate + ADP + phosphate + 2 H(+). The enzyme catalyses L-glutamine + H2O = L-glutamate + NH4(+). The catalysed reaction is UTP + NH4(+) + ATP = CTP + ADP + phosphate + 2 H(+). The protein operates within pyrimidine metabolism; CTP biosynthesis via de novo pathway; CTP from UDP: step 2/2. Its activity is regulated as follows. Allosterically activated by GTP, when glutamine is the substrate; GTP has no effect on the reaction when ammonia is the substrate. The allosteric effector GTP functions by stabilizing the protein conformation that binds the tetrahedral intermediate(s) formed during glutamine hydrolysis. Inhibited by the product CTP, via allosteric rather than competitive inhibition. Catalyzes the ATP-dependent amination of UTP to CTP with either L-glutamine or ammonia as the source of nitrogen. Regulates intracellular CTP levels through interactions with the four ribonucleotide triphosphates. This chain is CTP synthase, found in Shewanella loihica (strain ATCC BAA-1088 / PV-4).